We begin with the raw amino-acid sequence, 244 residues long: CTD nuclear envelope phosphatase 1 (244 aa).

Residues 7–29 form a helical membrane-spanning segment; the sequence is LLGLRTFVAFAAKLWSFFIYLLR. In terms of domain architecture, FCP1 homology spans 57 to 224; that stretch reads AQVKRKILVL…LNLLPMLDAL (168 aa).

This sequence belongs to the dullard family. Interacts with CNEP1R1; the complex dephosphorylates LPIN1 and LPIN2. As to expression, muscle specific with lower expression in other metabolic tissues.

Its subcellular location is the endoplasmic reticulum membrane. The protein resides in the nucleus membrane. The enzyme catalyses O-phospho-L-seryl-[protein] + H2O = L-seryl-[protein] + phosphate. It carries out the reaction O-phospho-L-threonyl-[protein] + H2O = L-threonyl-[protein] + phosphate. Its function is as follows. Serine/threonine protein phosphatase forming with CNEP1R1 an active phosphatase complex that dephosphorylates and may activate LPIN1 and LPIN2. LPIN1 and LPIN2 are phosphatidate phosphatases that catalyze the conversion of phosphatidic acid to diacylglycerol and control the metabolism of fatty acids at different levels. May indirectly modulate the lipid composition of nuclear and/or endoplasmic reticulum membranes and be required for proper nuclear membrane morphology and/or dynamics. May also indirectly regulate the production of lipid droplets and triacylglycerol. May antagonize BMP signaling. The protein is CTD nuclear envelope phosphatase 1 (Ctdnep1) of Mus musculus (Mouse).